The following is a 366-amino-acid chain: tRNA-specific 2-thiouridylase MnmA (366 aa).

ATP is bound by residues 12 to 19 (GMSGGVDS) and Met38. An interaction with target base in tRNA region spans residues 98 to 100 (NPD). Residue Cys103 is the Nucleophile of the active site. The cysteines at positions 103 and 200 are disulfide-linked. An ATP-binding site is contributed by Gly128. Residues 150-152 (KDQ) are interaction with tRNA. Catalysis depends on Cys200, which acts as the Cysteine persulfide intermediate. The segment at 312–313 (RY) is interaction with tRNA.

Belongs to the MnmA/TRMU family.

It is found in the cytoplasm. The enzyme catalyses S-sulfanyl-L-cysteinyl-[protein] + uridine(34) in tRNA + AH2 + ATP = 2-thiouridine(34) in tRNA + L-cysteinyl-[protein] + A + AMP + diphosphate + H(+). Functionally, catalyzes the 2-thiolation of uridine at the wobble position (U34) of tRNA, leading to the formation of s(2)U34. The sequence is that of tRNA-specific 2-thiouridylase MnmA from Pseudoalteromonas translucida (strain TAC 125).